The chain runs to 548 residues: Probable malate:quinone oxidoreductase (548 aa).

Residues 521–548 (DKPQAADSTPKPQLKPQPVQKEVADIAL) are disordered. The span at 530-541 (PKPQLKPQPVQK) shows a compositional bias: low complexity.

This sequence belongs to the MQO family. FAD is required as a cofactor.

The catalysed reaction is (S)-malate + a quinone = a quinol + oxaloacetate. It participates in carbohydrate metabolism; tricarboxylic acid cycle; oxaloacetate from (S)-malate (quinone route): step 1/1. This chain is Probable malate:quinone oxidoreductase, found in Escherichia coli (strain 55989 / EAEC).